A 23-amino-acid chain; its full sequence is Dahlein-4.2 (23 aa).

In terms of tissue distribution, expressed by the skin dorsal glands.

It is found in the secreted. Its function is as follows. Has no antimicrobial activity. The polypeptide is Dahlein-4.2 (Ranoidea dahlii (Dahl's aquatic frog)).